A 206-amino-acid chain; its full sequence is Large ribosomal subunit protein uL13x (206 aa).

The protein belongs to the universal ribosomal protein uL13 family.

The protein is Large ribosomal subunit protein uL13x (RPL13AC) of Arabidopsis thaliana (Mouse-ear cress).